We begin with the raw amino-acid sequence, 364 residues long: Mannose-1-phosphate guanyltransferase (364 aa).

Belongs to the transferase hexapeptide repeat family.

It localises to the cytoplasm. The catalysed reaction is alpha-D-mannose 1-phosphate + GTP + H(+) = GDP-alpha-D-mannose + diphosphate. It functions in the pathway nucleotide-sugar biosynthesis; GDP-alpha-D-mannose biosynthesis; GDP-alpha-D-mannose from alpha-D-mannose 1-phosphate (GTP route): step 1/1. Involved in cell wall synthesis where it is required for glycosylation. Involved in cell cycle progression through cell-size checkpoint. The chain is Mannose-1-phosphate guanyltransferase (mpg1) from Hypocrea jecorina (Trichoderma reesei).